We begin with the raw amino-acid sequence, 148 residues long: NADH-ubiquinone oxidoreductase chain 3 (148 aa).

3 helical membrane passes run 19–39 (FYMI…YIIT), 70–90 (FILI…ILPY), and 99–119 (IYGL…FIIE).

This sequence belongs to the complex I subunit 3 family.

It localises to the mitochondrion membrane. It catalyses the reaction a ubiquinone + NADH + 5 H(+)(in) = a ubiquinol + NAD(+) + 4 H(+)(out). In terms of biological role, core subunit of the mitochondrial membrane respiratory chain NADH dehydrogenase (Complex I) that is believed to belong to the minimal assembly required for catalysis. Complex I functions in the transfer of electrons from NADH to the respiratory chain. The immediate electron acceptor for the enzyme is believed to be ubiquinone. The protein is NADH-ubiquinone oxidoreductase chain 3 (ND3) of Wickerhamomyces canadensis (Yeast).